The chain runs to 273 residues: Dermonecrotic toxin LhSicTox-alphaIA2aviii (273 aa).

H5 is an active-site residue. Positions 25 and 27 each coordinate Mg(2+). The Nucleophile role is filled by H41. 2 cysteine pairs are disulfide-bonded: C45-C51 and C47-C190. D85 provides a ligand contact to Mg(2+).

This sequence belongs to the arthropod phospholipase D family. Class II subfamily. Mg(2+) serves as cofactor. In terms of tissue distribution, expressed by the venom gland.

The protein localises to the secreted. The catalysed reaction is an N-(acyl)-sphingosylphosphocholine = an N-(acyl)-sphingosyl-1,3-cyclic phosphate + choline. The enzyme catalyses an N-(acyl)-sphingosylphosphoethanolamine = an N-(acyl)-sphingosyl-1,3-cyclic phosphate + ethanolamine. It catalyses the reaction a 1-acyl-sn-glycero-3-phosphocholine = a 1-acyl-sn-glycero-2,3-cyclic phosphate + choline. It carries out the reaction a 1-acyl-sn-glycero-3-phosphoethanolamine = a 1-acyl-sn-glycero-2,3-cyclic phosphate + ethanolamine. Its function is as follows. Dermonecrotic toxins cleave the phosphodiester linkage between the phosphate and headgroup of certain phospholipids (sphingolipid and lysolipid substrates), forming an alcohol (often choline) and a cyclic phosphate. This toxin acts on sphingomyelin (SM). It may also act on ceramide phosphoethanolamine (CPE), lysophosphatidylcholine (LPC) and lysophosphatidylethanolamine (LPE), but not on lysophosphatidylserine (LPS), and lysophosphatidylglycerol (LPG). It acts by transphosphatidylation, releasing exclusively cyclic phosphate products as second products. Induces dermonecrosis, hemolysis, increased vascular permeability, edema, inflammatory response, and platelet aggregation. In Loxosceles hirsuta (Recluse spider), this protein is Dermonecrotic toxin LhSicTox-alphaIA2aviii.